The sequence spans 301 residues: Probable serine acetyltransferase 3 (301 aa).

Residues I280–D301 are disordered.

It belongs to the transferase hexapeptide repeat family. Homomultimer.

It carries out the reaction L-serine + acetyl-CoA = O-acetyl-L-serine + CoA. The protein operates within amino-acid biosynthesis; L-cysteine biosynthesis; L-cysteine from L-serine: step 1/2. This is Probable serine acetyltransferase 3 (SAT3) from Oryza sativa subsp. japonica (Rice).